We begin with the raw amino-acid sequence, 551 residues long: Intestinal-type alkaline phosphatase 2 (551 aa).

The first 19 residues, 1 to 19, serve as a signal peptide directing secretion; the sequence is MQGAWVLLLLGFRLQLSLS. Residue Asp-61 coordinates Mg(2+). The Zn(2+) site is built by Asp-61 and Ser-111. Ser-111 serves as the catalytic Phosphoserine intermediate. Cys-140 and Cys-202 form a disulfide bridge. The N-linked (GlcNAc...) asparagine glycan is linked to Asn-141. Ser-174 serves as a coordination point for Mg(2+). A Ca(2+)-binding site is contributed by Glu-235. Asn-241 is a glycosylation site (N-linked (GlcNAc...) asparagine). Residues Phe-288, Glu-289, and Asp-304 each coordinate Ca(2+). Glu-330 contacts Mg(2+). Zn(2+) contacts are provided by Asp-335, His-339, Asp-376, and His-377. The N-linked (GlcNAc...) asparagine glycan is linked to Asn-426. Cysteines 485 and 492 form a disulfide. Residues 496–537 form a disordered region; sequence PPADENRPTTPVQNSTTTTTTTTTTTTTTTTTRVQNSASSLG. A glycan (N-linked (GlcNAc...) asparagine) is linked at Asn-509. Over residues 511–527 the composition is skewed to low complexity; it reads TTTTTTTTTTTTTTTTT. A compositionally biased stretch (polar residues) spans 528–537; the sequence is RVQNSASSLG. The GPI-anchor amidated asparagine moiety is linked to residue Asn-531. The propeptide at 532-551 is removed in mature form; it reads SASSLGPATAPLAWHYWPRR.

It belongs to the alkaline phosphatase family. As to quaternary structure, homodimer. Mg(2+) is required as a cofactor. Requires Zn(2+) as cofactor. It depends on Ca(2+) as a cofactor.

It is found in the cell membrane. It carries out the reaction a phosphate monoester + H2O = an alcohol + phosphate. Alkaline phosphatase that can hydrolyze various phosphate compounds. This is Intestinal-type alkaline phosphatase 2 from Rattus norvegicus (Rat).